A 1125-amino-acid chain; its full sequence is Exportin-6 (1125 aa).

An N-acetylalanine modification is found at Ala2. Residues 31-97 (IEELLNNFAQ…RSCLPKLLLA (67 aa)) enclose the Importin N-terminal domain. Ser199 is subject to Phosphoserine. A phosphothreonine mark is found at Thr201 and Thr204. Phosphoserine occurs at positions 208 and 224.

The protein belongs to the exportin family. In terms of assembly, found in a complex with XPO6, Ran, ACTB and PFN1. Interacts with ACTB. Interacts with ACTB in a RanGTP-dependent manner.

The protein resides in the nucleus. The protein localises to the cytoplasm. Its function is as follows. Mediates the nuclear export of actin and profilin-actin complexes in somatic cells. The protein is Exportin-6 (XPO6) of Homo sapiens (Human).